We begin with the raw amino-acid sequence, 103 residues long: Large ribosomal subunit protein P2 (103 aa).

The segment at 64 to 103 (LAISSSQKSEPAQPADTAESTQATENKEEEDEDFDIFAAF) is disordered. The segment covering 90 to 103 (KEEEDEDFDIFAAF) has biased composition (acidic residues).

Belongs to the eukaryotic ribosomal protein P1/P2 family. As to quaternary structure, component of the large ribosomal subunit.

The protein localises to the cytoplasm. Plays an important role in the elongation step of protein synthesis. This is Large ribosomal subunit protein P2 (RPP2A) from Encephalitozoon cuniculi (strain GB-M1) (Microsporidian parasite).